The primary structure comprises 248 residues: Anamorsin homolog (248 aa).

The tract at residues 4–130 (FKGLQKSLYI…ETGSSARLSF (127 aa)) is N-terminal SAM-like domain. A linker region spans residues 131 to 161 (AKKTSSVNVWKISGDDEELIDEEELLDEEDK). [2Fe-2S] cluster-binding residues include Cys-172, Cys-181, Cys-184, and Cys-186. The tract at residues 172–186 (CSTTGKRKACKNCSC) is fe-S binding site A. [4Fe-4S] cluster-binding residues include Cys-209, Cys-212, Cys-220, and Cys-223. 2 consecutive short sequence motifs (cx2C motif) follow at residues 209–212 (CGNC) and 220–223 (CSTC). Residues 209 to 223 (CGNCYLGDAFRCSTC) form a fe-S binding site B region.

The protein belongs to the anamorsin family. In terms of assembly, monomer. [2Fe-2S] cluster serves as cofactor. The cofactor is [4Fe-4S] cluster.

The protein localises to the cytoplasm. Its subcellular location is the mitochondrion intermembrane space. Its function is as follows. Component of the cytosolic iron-sulfur (Fe-S) protein assembly (CIA) machinery. Required for the maturation of extramitochondrial Fe-S proteins. Part of an electron transfer chain functioning in an early step of cytosolic Fe-S biogenesis, facilitating the de novo assembly of a [4Fe-4S] cluster on the cytosolic Fe-S scaffold complex. Electrons are transferred from NADPH via a FAD- and FMN-containing diflavin oxidoreductase. Together with the diflavin oxidoreductase, also required for the assembly of the diferric tyrosyl radical cofactor of ribonucleotide reductase (RNR), probably by providing electrons for reduction during radical cofactor maturation in the catalytic small subunit. This Drosophila virilis (Fruit fly) protein is Anamorsin homolog.